A 304-amino-acid polypeptide reads, in one-letter code: uncharacterized protein (304 aa).

Belongs to the histone deacetylase family.

In terms of biological role, putative deacetylase. This is an uncharacterized protein from Synechocystis sp. (strain ATCC 27184 / PCC 6803 / Kazusa).